Consider the following 476-residue polypeptide: Aspartyl/glutamyl-tRNA(Asn/Gln) amidotransferase subunit B (476 aa).

Belongs to the GatB/GatE family. GatB subfamily. Heterotrimer of A, B and C subunits.

It catalyses the reaction L-glutamyl-tRNA(Gln) + L-glutamine + ATP + H2O = L-glutaminyl-tRNA(Gln) + L-glutamate + ADP + phosphate + H(+). The catalysed reaction is L-aspartyl-tRNA(Asn) + L-glutamine + ATP + H2O = L-asparaginyl-tRNA(Asn) + L-glutamate + ADP + phosphate + 2 H(+). Functionally, allows the formation of correctly charged Asn-tRNA(Asn) or Gln-tRNA(Gln) through the transamidation of misacylated Asp-tRNA(Asn) or Glu-tRNA(Gln) in organisms which lack either or both of asparaginyl-tRNA or glutaminyl-tRNA synthetases. The reaction takes place in the presence of glutamine and ATP through an activated phospho-Asp-tRNA(Asn) or phospho-Glu-tRNA(Gln). This chain is Aspartyl/glutamyl-tRNA(Asn/Gln) amidotransferase subunit B, found in Geobacillus thermodenitrificans (strain NG80-2).